The sequence spans 357 residues: 3-isopropylmalate dehydrogenase (357 aa).

The substrate site is built by R97, R107, R135, and D224. Residues D224, D248, and D252 each contribute to the Mg(2+) site. 282-294 (GSAPDIAGKNIAN) lines the NAD(+) pocket.

It belongs to the isocitrate and isopropylmalate dehydrogenases family. LeuB type 1 subfamily. Homodimer. The cofactor is Mg(2+). Mn(2+) is required as a cofactor.

The protein resides in the cytoplasm. The enzyme catalyses (2R,3S)-3-isopropylmalate + NAD(+) = 4-methyl-2-oxopentanoate + CO2 + NADH. It participates in amino-acid biosynthesis; L-leucine biosynthesis; L-leucine from 3-methyl-2-oxobutanoate: step 3/4. Functionally, catalyzes the oxidation of 3-carboxy-2-hydroxy-4-methylpentanoate (3-isopropylmalate) to 3-carboxy-4-methyl-2-oxopentanoate. The product decarboxylates to 4-methyl-2 oxopentanoate. The protein is 3-isopropylmalate dehydrogenase of Prochlorococcus marinus (strain MIT 9312).